Reading from the N-terminus, the 219-residue chain is Charged multivesicular body protein 5 (219 aa).

A coiled-coil region spans residues 22 to 153 (TNVDGRAESI…EIQEALSRSY (132 aa)).

Belongs to the SNF7 family. Probable peripherally associated component of the endosomal sorting required for transport complex III (ESCRT-III).

It localises to the cytoplasm. The protein localises to the cytosol. The protein resides in the endosome membrane. Probable peripherally associated component of the endosomal sorting required for transport complex III (ESCRT-III) which is involved in multivesicular bodies (MVBs) formation and sorting of endosomal cargo proteins into MVBs. MVBs contain intraluminal vesicles (ILVs) that are generated by invagination and scission from the limiting membrane of the endosome and mostly are delivered to lysosomes enabling degradation of membrane proteins, such as stimulated growth factor receptors, lysosomal enzymes and lipids. In Xenopus laevis (African clawed frog), this protein is Charged multivesicular body protein 5 (chmp5).